A 606-amino-acid chain; its full sequence is Probable methyltransferase PMT5 (606 aa).

Residues 1 to 20 (MRGSWYKSVSSVFGLRPRIR) lie on the Cytoplasmic side of the membrane. The helical; Signal-anchor for type II membrane protein transmembrane segment at 21–41 (GLLFFIVGVVALVTILAPLTS) threads the bilayer. Residues 42–606 (NSYDSSSSST…LVCQKPFIKK (565 aa)) lie on the Lumenal side of the membrane. N-linked (GlcNAc...) asparagine glycans are attached at residues Asn101 and Asn409.

Belongs to the methyltransferase superfamily.

It is found in the endoplasmic reticulum membrane. This Arabidopsis thaliana (Mouse-ear cress) protein is Probable methyltransferase PMT5.